Reading from the N-terminus, the 226-residue chain is Ribosomal RNA small subunit methyltransferase G (226 aa).

S-adenosyl-L-methionine-binding positions include G83, F88, 136-137, and R152; that span reads IE. Positions 199-226 are disordered; the sequence is FSPSQSDPEGSVLKVRGLHGPDGQPHRR.

The protein belongs to the methyltransferase superfamily. RNA methyltransferase RsmG family.

The protein localises to the cytoplasm. The enzyme catalyses guanosine(527) in 16S rRNA + S-adenosyl-L-methionine = N(7)-methylguanosine(527) in 16S rRNA + S-adenosyl-L-homocysteine. Functionally, specifically methylates the N7 position of guanine in position 527 of 16S rRNA. The sequence is that of Ribosomal RNA small subunit methyltransferase G from Parvibaculum lavamentivorans (strain DS-1 / DSM 13023 / NCIMB 13966).